Here is an 858-residue protein sequence, read N- to C-terminus: Leucine--tRNA ligase (858 aa).

The 'HIGH' region signature appears at 42–52; sequence PYPSGRLHMGH. Positions 618-622 match the 'KMSKS' region motif; that stretch reads KMSKS. Position 621 (lysine 621) interacts with ATP.

The protein belongs to the class-I aminoacyl-tRNA synthetase family.

The protein resides in the cytoplasm. It catalyses the reaction tRNA(Leu) + L-leucine + ATP = L-leucyl-tRNA(Leu) + AMP + diphosphate. This Aliivibrio salmonicida (strain LFI1238) (Vibrio salmonicida (strain LFI1238)) protein is Leucine--tRNA ligase.